The sequence spans 225 residues: Holliday junction branch migration complex subunit RuvA (225 aa).

The segment at 1–71 is domain I; sequence MISWISGELV…EDSDLLFGFS (71 aa). The segment at 72 to 150 is domain II; the sequence is SKDQKNFFIE…NELKIQEEKS (79 aa). Positions 151–161 are flexible linker; that stretch reads KDEFHIKDNKI. The segment at 161–225 is domain III; that stretch reads INKIVSDIEL…LDNDSSNIVR (65 aa).

The protein belongs to the RuvA family. Homotetramer. Forms an RuvA(8)-RuvB(12)-Holliday junction (HJ) complex. HJ DNA is sandwiched between 2 RuvA tetramers; dsDNA enters through RuvA and exits via RuvB. An RuvB hexamer assembles on each DNA strand where it exits the tetramer. Each RuvB hexamer is contacted by two RuvA subunits (via domain III) on 2 adjacent RuvB subunits; this complex drives branch migration. In the full resolvosome a probable DNA-RuvA(4)-RuvB(12)-RuvC(2) complex forms which resolves the HJ.

The protein localises to the cytoplasm. In terms of biological role, the RuvA-RuvB-RuvC complex processes Holliday junction (HJ) DNA during genetic recombination and DNA repair, while the RuvA-RuvB complex plays an important role in the rescue of blocked DNA replication forks via replication fork reversal (RFR). RuvA specifically binds to HJ cruciform DNA, conferring on it an open structure. The RuvB hexamer acts as an ATP-dependent pump, pulling dsDNA into and through the RuvAB complex. HJ branch migration allows RuvC to scan DNA until it finds its consensus sequence, where it cleaves and resolves the cruciform DNA. The chain is Holliday junction branch migration complex subunit RuvA from Prochlorococcus marinus (strain MIT 9312).